A 463-amino-acid polypeptide reads, in one-letter code: ATP sulfurylase 1, chloroplastic (463 aa).

Residues 1–48 (MASMAAVLSKTPFLSQPLTKSSPNSDLPFAAVSFPSKSLRRRVGSIRA) constitute a chloroplast transit peptide.

Belongs to the sulfate adenylyltransferase family. Homotetramer.

The protein resides in the plastid. It localises to the chloroplast stroma. It carries out the reaction sulfate + ATP + H(+) = adenosine 5'-phosphosulfate + diphosphate. It participates in sulfur metabolism; hydrogen sulfide biosynthesis; sulfite from sulfate: step 1/3. Functionally, mediates selenate (Se) reduction, and promotes Se and sulfur (S) uptake and assimilation. The polypeptide is ATP sulfurylase 1, chloroplastic (APS1) (Arabidopsis thaliana (Mouse-ear cress)).